A 111-amino-acid chain; its full sequence is Large ribosomal subunit protein uL22 (111 aa).

The protein belongs to the universal ribosomal protein uL22 family. As to quaternary structure, part of the 50S ribosomal subunit.

Functionally, this protein binds specifically to 23S rRNA; its binding is stimulated by other ribosomal proteins, e.g. L4, L17, and L20. It is important during the early stages of 50S assembly. It makes multiple contacts with different domains of the 23S rRNA in the assembled 50S subunit and ribosome. Its function is as follows. The globular domain of the protein is located near the polypeptide exit tunnel on the outside of the subunit, while an extended beta-hairpin is found that lines the wall of the exit tunnel in the center of the 70S ribosome. This Xanthomonas euvesicatoria pv. vesicatoria (strain 85-10) (Xanthomonas campestris pv. vesicatoria) protein is Large ribosomal subunit protein uL22.